Reading from the N-terminus, the 697-residue chain is Elongation factor G (697 aa).

The tr-type G domain maps to 10–285 (AKTRNIGIMA…GVIDYLPSPL (276 aa)). GTP is bound by residues 19-26 (AHIDAGKT), 83-87 (DTPGH), and 137-140 (NKMD).

It belongs to the TRAFAC class translation factor GTPase superfamily. Classic translation factor GTPase family. EF-G/EF-2 subfamily.

It is found in the cytoplasm. In terms of biological role, catalyzes the GTP-dependent ribosomal translocation step during translation elongation. During this step, the ribosome changes from the pre-translocational (PRE) to the post-translocational (POST) state as the newly formed A-site-bound peptidyl-tRNA and P-site-bound deacylated tRNA move to the P and E sites, respectively. Catalyzes the coordinated movement of the two tRNA molecules, the mRNA and conformational changes in the ribosome. This chain is Elongation factor G, found in Lactobacillus helveticus (strain DPC 4571).